Reading from the N-terminus, the 260-residue chain is tRNA pseudouridine synthase A (260 aa).

The Nucleophile role is filled by aspartate 52. Residue tyrosine 111 participates in substrate binding.

The protein belongs to the tRNA pseudouridine synthase TruA family. As to quaternary structure, homodimer.

It catalyses the reaction uridine(38/39/40) in tRNA = pseudouridine(38/39/40) in tRNA. Functionally, formation of pseudouridine at positions 38, 39 and 40 in the anticodon stem and loop of transfer RNAs. This is tRNA pseudouridine synthase A from Beijerinckia indica subsp. indica (strain ATCC 9039 / DSM 1715 / NCIMB 8712).